The primary structure comprises 394 residues: Chorismate synthase (394 aa).

Positions 42 and 48 each coordinate NADP(+). FMN-binding positions include 137–139, 258–259, G302, 317–321, and R343; these read RAS, QA, and KPIAT.

This sequence belongs to the chorismate synthase family. In terms of assembly, homotetramer. It depends on FMNH2 as a cofactor.

The catalysed reaction is 5-O-(1-carboxyvinyl)-3-phosphoshikimate = chorismate + phosphate. Its pathway is metabolic intermediate biosynthesis; chorismate biosynthesis; chorismate from D-erythrose 4-phosphate and phosphoenolpyruvate: step 7/7. Catalyzes the anti-1,4-elimination of the C-3 phosphate and the C-6 proR hydrogen from 5-enolpyruvylshikimate-3-phosphate (EPSP) to yield chorismate, which is the branch point compound that serves as the starting substrate for the three terminal pathways of aromatic amino acid biosynthesis. This reaction introduces a second double bond into the aromatic ring system. The protein is Chorismate synthase of Streptomyces avermitilis (strain ATCC 31267 / DSM 46492 / JCM 5070 / NBRC 14893 / NCIMB 12804 / NRRL 8165 / MA-4680).